Here is a 346-residue protein sequence, read N- to C-terminus: Phosphoribosylformylglycinamidine cyclo-ligase (346 aa).

The protein belongs to the AIR synthase family.

It is found in the cytoplasm. It catalyses the reaction 2-formamido-N(1)-(5-O-phospho-beta-D-ribosyl)acetamidine + ATP = 5-amino-1-(5-phospho-beta-D-ribosyl)imidazole + ADP + phosphate + H(+). It participates in purine metabolism; IMP biosynthesis via de novo pathway; 5-amino-1-(5-phospho-D-ribosyl)imidazole from N(2)-formyl-N(1)-(5-phospho-D-ribosyl)glycinamide: step 2/2. This chain is Phosphoribosylformylglycinamidine cyclo-ligase, found in Polaromonas sp. (strain JS666 / ATCC BAA-500).